A 143-amino-acid polypeptide reads, in one-letter code: Transcriptional regulator MraZ (143 aa).

SpoVT-AbrB domains are found at residues 5 to 47 (QYEH…SLDE) and 76 to 119 (AVEC…SKEV).

The protein belongs to the MraZ family. Forms oligomers.

It is found in the cytoplasm. It localises to the nucleoid. The protein is Transcriptional regulator MraZ of Caldanaerobacter subterraneus subsp. tengcongensis (strain DSM 15242 / JCM 11007 / NBRC 100824 / MB4) (Thermoanaerobacter tengcongensis).